The following is a 189-amino-acid chain: ATP-dependent protease subunit HslV (189 aa).

Residue threonine 12 is part of the active site. Residues serine 172, cysteine 175, and threonine 178 each coordinate Na(+).

It belongs to the peptidase T1B family. HslV subfamily. In terms of assembly, a double ring-shaped homohexamer of HslV is capped on each side by a ring-shaped HslU homohexamer. The assembly of the HslU/HslV complex is dependent on binding of ATP.

Its subcellular location is the cytoplasm. The catalysed reaction is ATP-dependent cleavage of peptide bonds with broad specificity.. Its activity is regulated as follows. Allosterically activated by HslU binding. Functionally, protease subunit of a proteasome-like degradation complex believed to be a general protein degrading machinery. In Ehrlichia canis (strain Jake), this protein is ATP-dependent protease subunit HslV.